The chain runs to 737 residues: Ribosome-releasing factor 2, mitochondrial (737 aa).

The transit peptide at 1–29 (MLKYALHSGGMPRNRLLRQLSAYIFRRSY) directs the protein to the mitochondrion. One can recognise a tr-type G domain in the interval 31 to 310 (SNIRNIGILA…AVNTYLPAPE (280 aa)). GTP is bound by residues 40–47 (AHIDAGKT), 104–108 (DTPGH), and 158–161 (NKMD).

This sequence belongs to the TRAFAC class translation factor GTPase superfamily. Classic translation factor GTPase family. EF-G/EF-2 subfamily.

It is found in the mitochondrion. Functionally, mitochondrial GTPase that mediates the disassembly of ribosomes from messenger RNA at the termination of mitochondrial protein biosynthesis. Not involved in the GTP-dependent ribosomal translocation step during translation elongation. This chain is Ribosome-releasing factor 2, mitochondrial, found in Drosophila persimilis (Fruit fly).